Here is a 215-residue protein sequence, read N- to C-terminus: Jasmonate monooxygenase ABM (215 aa).

An ABM domain is found at 2–90 (FAVIFETRPQ…GVLEDYHLRV (89 aa)).

Its subcellular location is the endoplasmic reticulum. It localises to the secreted. It carries out the reaction jasmonate + NADPH + O2 + H(+) = (1R,2R)-12-hydroxyjasmonate + NADP(+) + H2O. Its function is as follows. Monooxygenase that converts the endogenous (and likely the host) jasmonate (JA) to its hydroxylated derivative 12-hydroxyjasmonate (12OH-JA), also known as tuberonic acid, a compound that attenuates or disables jasmonate-based host innate immunity and which is essential for proper initiation and elaboration of the blast disease in rice. ABM, together with a polyketide synthase MGG_04775 and the esterase MGG_04774, share the secondary metabolism gene cluster with ABC transporter ABC3, and therefore may also be involved in the synthesis of other important metabolites such as the ABC3 transporter efflux substrate (ATS) and/or additional polyketides. The sequence is that of Jasmonate monooxygenase ABM from Pyricularia oryzae (strain 70-15 / ATCC MYA-4617 / FGSC 8958) (Rice blast fungus).